The sequence spans 164 residues: Nucleotide-binding protein Acid345_2028 (164 aa).

It belongs to the YajQ family.

Nucleotide-binding protein. The polypeptide is Nucleotide-binding protein Acid345_2028 (Koribacter versatilis (strain Ellin345)).